The following is a 256-amino-acid chain: uncharacterized protein (256 aa).

A disordered region spans residues 1–23 (MIPPCENAPHIIYHESQRGTRDR). A compositionally biased stretch (basic and acidic residues) spans 12 to 23 (IYHESQRGTRDR).

This is an uncharacterized protein from Homo sapiens (Human).